A 79-amino-acid chain; its full sequence is MIHPGHILFLLLLPVAAAQTTPGSCSGCGSLSLPLLAGLVAADAVASPLIVGAVFLCARPRRSPAQGDGKVYINMPGRG.

An N-terminal signal peptide occupies residues 1 to 18; that stretch reads MIHPGHILFLLLLPVAAA. Topologically, residues 19–34 are extracellular; sequence QTTPGSCSGCGSLSLP. The helical transmembrane segment at 35 to 55 threads the bilayer; sequence LLAGLVAADAVASPLIVGAVF. At 56-79 the chain is on the cytoplasmic side; the sequence is LCARPRRSPAQGDGKVYINMPGRG. At Tyr-72 the chain carries Phosphotyrosine. A GRB2 binding site region spans residues 72–74; it reads YIN. The interval 72 to 75 is PIK3R1 binding site; it reads YINM.

This sequence belongs to the DAP10 family. As to quaternary structure, homodimer; Disulfide-linked. Heterohexamer composed of four subunits of HCST/DAP10 and two subunits of KLRK1. Interacts (via transmembrane domain) with KLRK1 (via transmembrane domain); the interaction is required for KLRK1 NK cell surface and induces NK cell-mediated cytotoxicity. Interacts with PIK3R1 and GRB2. Interacts with CLEC5A. Forms an CLEC5A/TYROBP/HCST trimolecular complex depending almost solely on TYROBP. Interacts with CD300H. In terms of processing, phosphorylated; PIK3R1 and GRB2 associate specifically with tyrosine-phosphorylated HCST. Post-translationally, O-glycosylated.

Its subcellular location is the membrane. Functionally, transmembrane adapter protein which associates with KLRK1 to form an activation receptor KLRK1-HCST in lymphoid and myeloid cells; this receptor plays a major role in triggering cytotoxicity against target cells expressing cell surface ligands such as MHC class I chain-related MICA and MICB, and UL16-binding proteins (ULBPs); these ligands are up-regulated by stress conditions and pathological state such as viral infection and tumor transformation. Functions as a docking site for PI3-kinase PIK3R1 and GRB2. Interaction of ULBPs with KLRK1-HCST triggers calcium mobilization and activation of the PIK3R1, MAP2K/ERK, and JAK2/STAT5 signaling pathways. Both PIK3R1 and GRB2 are required for full KLRK1-HCST-mediated activation and ultimate killing of target cells. In NK cells, KLRK1-HCST signaling directly induces cytotoxicity and enhances cytokine production initiated via DAP12/TYROBP-associated receptors. In T-cells, it provides primarily costimulation for TCR-induced signals. KLRK1-HCST receptor plays a role in immune surveillance against tumors and is required for cytolysis of tumors cells; indeed, melanoma cells that do not express KLRK1 ligands escape from immune surveillance mediated by NK cells. The polypeptide is Hematopoietic cell signal transducer (HCST) (Macaca mulatta (Rhesus macaque)).